The chain runs to 92 residues: N(2)-fixation sustaining protein CowN (92 aa).

This sequence belongs to the CowN family.

Its function is as follows. Is required to sustain N(2)-dependent growth in the presence of low levels of carbon monoxide (CO). Probably acts by protecting the N(2) fixation ability of the nitrogenase complex, which is inactivated in the presence of CO. In Rhodopseudomonas palustris (strain BisB18), this protein is N(2)-fixation sustaining protein CowN.